The sequence spans 482 residues: tRNA sulfurtransferase (482 aa).

A THUMP domain is found at 61–165; the sequence is LAIRDALTRI…DDRLLLIKGR (105 aa). ATP is bound by residues 183 to 184, K265, G287, and Q296; that span reads LI. Residues C344 and C456 are joined by a disulfide bond. The Rhodanese domain maps to 404 to 482; it reads FGPNDVILDI…GFNNVKVYRP (79 aa). Residue C456 is the Cysteine persulfide intermediate of the active site.

This sequence belongs to the ThiI family.

It localises to the cytoplasm. The enzyme catalyses [ThiI sulfur-carrier protein]-S-sulfanyl-L-cysteine + a uridine in tRNA + 2 reduced [2Fe-2S]-[ferredoxin] + ATP + H(+) = [ThiI sulfur-carrier protein]-L-cysteine + a 4-thiouridine in tRNA + 2 oxidized [2Fe-2S]-[ferredoxin] + AMP + diphosphate. The catalysed reaction is [ThiS sulfur-carrier protein]-C-terminal Gly-Gly-AMP + S-sulfanyl-L-cysteinyl-[cysteine desulfurase] + AH2 = [ThiS sulfur-carrier protein]-C-terminal-Gly-aminoethanethioate + L-cysteinyl-[cysteine desulfurase] + A + AMP + 2 H(+). It functions in the pathway cofactor biosynthesis; thiamine diphosphate biosynthesis. Functionally, catalyzes the ATP-dependent transfer of a sulfur to tRNA to produce 4-thiouridine in position 8 of tRNAs, which functions as a near-UV photosensor. Also catalyzes the transfer of sulfur to the sulfur carrier protein ThiS, forming ThiS-thiocarboxylate. This is a step in the synthesis of thiazole, in the thiamine biosynthesis pathway. The sulfur is donated as persulfide by IscS. The chain is tRNA sulfurtransferase from Shigella boydii serotype 4 (strain Sb227).